A 291-amino-acid polypeptide reads, in one-letter code: ATP synthase gamma chain (291 aa).

Belongs to the ATPase gamma chain family. As to quaternary structure, F-type ATPases have 2 components, CF(1) - the catalytic core - and CF(0) - the membrane proton channel. CF(1) has five subunits: alpha(3), beta(3), gamma(1), delta(1), epsilon(1). CF(0) has three main subunits: a, b and c.

Its subcellular location is the cell membrane. Its function is as follows. Produces ATP from ADP in the presence of a proton gradient across the membrane. The gamma chain is believed to be important in regulating ATPase activity and the flow of protons through the CF(0) complex. This is ATP synthase gamma chain from Lachnoclostridium phytofermentans (strain ATCC 700394 / DSM 18823 / ISDg) (Clostridium phytofermentans).